Reading from the N-terminus, the 465-residue chain is ATP synthase subunit beta (465 aa).

Residue 152 to 159 participates in ATP binding; that stretch reads GGAGVGKT.

It belongs to the ATPase alpha/beta chains family. F-type ATPases have 2 components, CF(1) - the catalytic core - and CF(0) - the membrane proton channel. CF(1) has five subunits: alpha(3), beta(3), gamma(1), delta(1), epsilon(1). CF(0) has three main subunits: a(1), b(2) and c(9-12). The alpha and beta chains form an alternating ring which encloses part of the gamma chain. CF(1) is attached to CF(0) by a central stalk formed by the gamma and epsilon chains, while a peripheral stalk is formed by the delta and b chains.

The protein resides in the cell inner membrane. It carries out the reaction ATP + H2O + 4 H(+)(in) = ADP + phosphate + 5 H(+)(out). In terms of biological role, produces ATP from ADP in the presence of a proton gradient across the membrane. The catalytic sites are hosted primarily by the beta subunits. This Campylobacter curvus (strain 525.92) protein is ATP synthase subunit beta.